A 500-amino-acid polypeptide reads, in one-letter code: MNYFPWLTIIVILPIFAGSLIFFLPHRGNRVIRWYTIFICIFELLLTAYTFCYHFQTDDPLIQLMEDYKWIQLFDFHWRLGIDGLSIGPILLTGFITTLATLAAWPVTRDSRLFNFLMLAMYSAQIGLFSSRDLLLFFIMWELELIPVYLLLSMWGGKKRLYSATKFILYTAGGSIFLLMGVLGIGLYGSNEPTLNFETSANQSYPLPLEIIFYIGFFIAFAVKLPIIPLHTWLPDTHGEAHYSTCMLLAGILLKMGAYGLVRINMELLSHAHSIFSPWLLIVGTIQIIYAASTSLGQRNLKKRIAYSSVSHMGFIIIGIGSITDTGLNGALLQIISHGFIGAALFFLAGTTYDRIRLVYLDEMGGIAILMPKIFTIFSTFSMASLALPGMSGFVAELIVFFGIITSQKYLLMPKILITFVMAIGMILTPIYSLSMSRQMFYGYKFFNIPNSYFFDSGPRELFLSISLFLPVLGIGMYPDFIFSLSVDKVEVILSNSFSK.

The next 15 membrane-spanning stretches (helical) occupy residues 4 to 24, 35 to 55, 87 to 107, 113 to 130, 134 to 154, 167 to 187, 211 to 231, 242 to 262, 272 to 292, 305 to 325, 330 to 350, 364 to 384, 386 to 406, 416 to 436, and 463 to 483; these read FPWL…IFFL, YTIF…CYHF, IGPI…AWPV, LFNF…GLFS, LLLF…LLSM, FILY…GIGL, IIFY…IPLH, HYST…YGLV, AHSI…IYAA, IAYS…SITD, GALL…FLAG, MGGI…FSMA, LALP…GIIT, ILIT…SLSM, and FLSI…DFIF.

Belongs to the complex I subunit 4 family.

It localises to the plastid. It is found in the chloroplast thylakoid membrane. The catalysed reaction is a plastoquinone + NADH + (n+1) H(+)(in) = a plastoquinol + NAD(+) + n H(+)(out). It catalyses the reaction a plastoquinone + NADPH + (n+1) H(+)(in) = a plastoquinol + NADP(+) + n H(+)(out). The sequence is that of NAD(P)H-quinone oxidoreductase chain 4, chloroplastic from Coffea arabica (Arabian coffee).